Consider the following 195-residue polypeptide: Thymidylate kinase (195 aa).

7–14 (GVDTCGKS) lines the ATP pocket.

This sequence belongs to the thymidylate kinase family.

The catalysed reaction is dTMP + ATP = dTDP + ADP. In terms of biological role, phosphorylation of dTMP to form dTDP in both de novo and salvage pathways of dTTP synthesis. In Helicobacter hepaticus (strain ATCC 51449 / 3B1), this protein is Thymidylate kinase.